The primary structure comprises 432 residues: Trigger factor (432 aa).

The PPIase FKBP-type domain maps to 161–246 (EDRVTIDFTG…LKKVEERELP (86 aa)).

Belongs to the FKBP-type PPIase family. Tig subfamily. Homodimer and monomer. In vivo most of the ribosomes are in complex with monomeric TF. Uncomplexed TF, however, is in a monomer-dimer equilibrium with approximately two thirds of TF existing in a dimeric state.

The protein resides in the cytoplasm. It catalyses the reaction [protein]-peptidylproline (omega=180) = [protein]-peptidylproline (omega=0). Its function is as follows. Involved in protein export. Acts as a chaperone by maintaining the newly synthesized protein in an open conformation. Functions as a peptidyl-prolyl cis-trans isomerase. In Shigella dysenteriae serotype 1 (strain Sd197), this protein is Trigger factor.